The primary structure comprises 314 residues: Cyclin-dependent kinase 2 (314 aa).

One can recognise a Protein kinase domain in the interval 8–287 (FQRAEKIGEG…AKDALQHAYF (280 aa)). Residues 14–22 (IGEGTYGIV) and lysine 37 contribute to the ATP site. Residue threonine 18 is modified to Phosphothreonine. Tyrosine 19 is subject to Phosphotyrosine. Aspartate 130 functions as the Proton acceptor in the catalytic mechanism. Tyrosine 162 is modified (phosphotyrosine). Residue threonine 163 is modified to Phosphothreonine.

This sequence belongs to the protein kinase superfamily. CMGC Ser/Thr protein kinase family. CDC2/CDKX subfamily. Interacts with cyclin CycG.

It carries out the reaction L-seryl-[protein] + ATP = O-phospho-L-seryl-[protein] + ADP + H(+). The catalysed reaction is L-threonyl-[protein] + ATP = O-phospho-L-threonyl-[protein] + ADP + H(+). The enzyme catalyses [DNA-directed RNA polymerase] + ATP = phospho-[DNA-directed RNA polymerase] + ADP + H(+). Its function is as follows. Like Cdk1, could play a key role in the control of the eukaryotic cell cycle. This chain is Cyclin-dependent kinase 2, found in Drosophila melanogaster (Fruit fly).